Here is a 74-residue protein sequence, read N- to C-terminus: MNFLLDLFTNWTFDKVLDYTLAAVIWSVFKSRSKQNKYPGYFEKIRRYRNLHPLLRSLSMRVLLSITIHPYMFS.

This Bacillus subtilis (strain 168) protein is Putative protein YozX (yozX).